Here is a 161-residue protein sequence, read N- to C-terminus: Vasotocin-neurophysin VT (161 aa).

A signal peptide spans 1–19 (MAEPSLPLSFLCLLALSSA). Cysteine 20 and cysteine 25 are oxidised to a cystine. Glycine 28 is subject to Glycine amide. 7 cysteine pairs are disulfide-bonded: cysteine 41-cysteine 85, cysteine 44-cysteine 58, cysteine 52-cysteine 75, cysteine 59-cysteine 65, cysteine 92-cysteine 104, cysteine 98-cysteine 116, and cysteine 105-cysteine 110.

It belongs to the vasopressin/oxytocin family. In terms of processing, seven disulfide bonds are present in neurophysin.

It localises to the secreted. In terms of biological role, vasotocin is an antidiuretic hormone. In Gallus gallus (Chicken), this protein is Vasotocin-neurophysin VT.